A 497-amino-acid chain; its full sequence is Cytochrome P450 monooxygenase opdB (497 aa).

A helical membrane pass occupies residues 26-46 (YLGAMAGSVILLISAFTLSLG). Positions 69-90 (MSKFTRSRELSQQGEDAAGTEP) are disordered. Cys454 is a heme binding site.

It depends on heme as a cofactor.

It localises to the membrane. Its pathway is secondary metabolite biosynthesis. In terms of biological role, cytochrome P450 monooxygenase; part of the gene cluster that mediates the biosynthesis of oxopyrrolidines, polyketide-amino acid hybrid compounds with feature structures of tetramic acid. Does not seem to play a role in oxopyrrolidines A and B biosynthesis. May be involved in further modifications of these oxopyrrolidines. In Penicillium oxalicum (strain 114-2 / CGMCC 5302) (Penicillium decumbens), this protein is Cytochrome P450 monooxygenase opdB.